Here is a 98-residue protein sequence, read N- to C-terminus: MSPAVLNITMAFTFSLLGTLMFRSHLMSTLLCLEGMMLSLFMLATITPLNTHSMIMFPIPIAILVFAACEAAVGLALLAKISNTYGSDFVQNLNLLQC.

3 helical membrane passes run S2–F22, L26–I46, and I59–A79.

It belongs to the complex I subunit 4L family. Core subunit of respiratory chain NADH dehydrogenase (Complex I) which is composed of 45 different subunits.

It is found in the mitochondrion inner membrane. The enzyme catalyses a ubiquinone + NADH + 5 H(+)(in) = a ubiquinol + NAD(+) + 4 H(+)(out). Its function is as follows. Core subunit of the mitochondrial membrane respiratory chain NADH dehydrogenase (Complex I) which catalyzes electron transfer from NADH through the respiratory chain, using ubiquinone as an electron acceptor. Part of the enzyme membrane arm which is embedded in the lipid bilayer and involved in proton translocation. In Alexandromys kikuchii (Taiwan vole), this protein is NADH-ubiquinone oxidoreductase chain 4L (MT-ND4L).